The chain runs to 156 residues: Small ribosomal subunit protein uS7 (156 aa).

The protein belongs to the universal ribosomal protein uS7 family. Part of the 30S ribosomal subunit. Contacts proteins S9 and S11.

Functionally, one of the primary rRNA binding proteins, it binds directly to 16S rRNA where it nucleates assembly of the head domain of the 30S subunit. Is located at the subunit interface close to the decoding center, probably blocks exit of the E-site tRNA. The sequence is that of Small ribosomal subunit protein uS7 from Nitrobacter winogradskyi (strain ATCC 25391 / DSM 10237 / CIP 104748 / NCIMB 11846 / Nb-255).